Consider the following 773-residue polypeptide: uncharacterized protein (773 aa).

Positions 192 to 219 (EASGTNNNPKEIEMNSDTTSSVPKSGST) are disordered.

The protein localises to the cytoplasm. This is an uncharacterized protein from Schizosaccharomyces pombe (strain 972 / ATCC 24843) (Fission yeast).